The following is a 603-amino-acid chain: DNA mismatch repair protein MutL (603 aa).

The protein belongs to the DNA mismatch repair MutL/HexB family.

Functionally, this protein is involved in the repair of mismatches in DNA. It is required for dam-dependent methyl-directed DNA mismatch repair. May act as a 'molecular matchmaker', a protein that promotes the formation of a stable complex between two or more DNA-binding proteins in an ATP-dependent manner without itself being part of a final effector complex. In Sphingopyxis alaskensis (strain DSM 13593 / LMG 18877 / RB2256) (Sphingomonas alaskensis), this protein is DNA mismatch repair protein MutL.